The following is a 236-amino-acid chain: Bidirectional sugar transporter SWEET2 (236 aa).

Over 1–15 the chain is Extracellular; sequence MDVFAFNASLSMCKD. A glycan (N-linked (GlcNAc...) asparagine) is linked at N7. Residues 16–36 traverse the membrane as a helical segment; sequence VAGIAGNIFAFGLFVSPMPTF. A MtN3/slv 1 domain is found at 18 to 103; the sequence is GIAGNIFAFG…ILFIMHTDKK (86 aa). The Cytoplasmic portion of the chain corresponds to 37–50; that stretch reads RRIMRNKSTEQFSG. A helical transmembrane segment spans residues 51–71; it reads LPYIYALLNCLICLWYGTPFI. The Extracellular portion of the chain corresponds to 72-76; it reads SHSNA. Residues 77–97 form a helical membrane-spanning segment; it reads MLMTVNSVGATFQLCYIILFI. Residues 98-108 are Cytoplasmic-facing; it reads MHTDKKNKMKM. A helical membrane pass occupies residues 109–129; that stretch reads LGLLFVVFAVVGVIVAGSLQI. Residues 130–137 lie on the Extracellular side of the membrane; that stretch reads PDQLTRWY. The chain crosses the membrane as a helical span at residues 138-158; it reads FVGFLSCGSLVSMFASPLFVI. One can recognise a MtN3/slv 2 domain in the interval 138–221; that stretch reads FVGFLSCGSL…LALYCYYHRN (84 aa). Residues 159–170 lie on the Cytoplasmic side of the membrane; that stretch reads NLVIRTKSVEFM. A helical membrane pass occupies residues 171–191; that stretch reads PFYLSLSTFLMSASFLLYGLF. Topologically, residues 192 to 194 are extracellular; it reads NSD. A helical membrane pass occupies residues 195-215; the sequence is AFVYTPNGIGTILGIVQLALY. Residues 216–236 are Cytoplasmic-facing; sequence CYYHRNSIEEETKEPLIVSYV.

Belongs to the SWEET sugar transporter family. Forms heterooligomers with SWEET17.

Its subcellular location is the cell membrane. Mediates both low-affinity uptake and efflux of sugar across the plasma membrane. The protein is Bidirectional sugar transporter SWEET2 of Arabidopsis thaliana (Mouse-ear cress).